Consider the following 181-residue polypeptide: ATP synthase subunit b (181 aa).

Residues 23–43 (FIHIPTFIYTALNLVILYFIL) form a helical membrane-spanning segment.

Belongs to the ATPase B chain family. In terms of assembly, F-type ATPases have 2 components, F(1) - the catalytic core - and F(0) - the membrane proton channel. F(1) has five subunits: alpha(3), beta(3), gamma(1), delta(1), epsilon(1). F(0) has three main subunits: a(1), b(2) and c(10-14). The alpha and beta chains form an alternating ring which encloses part of the gamma chain. F(1) is attached to F(0) by a central stalk formed by the gamma and epsilon chains, while a peripheral stalk is formed by the delta and b chains.

It is found in the cell membrane. Functionally, f(1)F(0) ATP synthase produces ATP from ADP in the presence of a proton or sodium gradient. F-type ATPases consist of two structural domains, F(1) containing the extramembraneous catalytic core and F(0) containing the membrane proton channel, linked together by a central stalk and a peripheral stalk. During catalysis, ATP synthesis in the catalytic domain of F(1) is coupled via a rotary mechanism of the central stalk subunits to proton translocation. Its function is as follows. Component of the F(0) channel, it forms part of the peripheral stalk, linking F(1) to F(0). This Acetivibrio thermocellus (strain ATCC 27405 / DSM 1237 / JCM 9322 / NBRC 103400 / NCIMB 10682 / NRRL B-4536 / VPI 7372) (Clostridium thermocellum) protein is ATP synthase subunit b.